Here is a 142-residue protein sequence, read N- to C-terminus: Hemoglobin subunit alpha-A (142 aa).

One can recognise a Globin domain in the interval 2–142 (VLSAADKTNV…VGTVLTAKYR (141 aa)). O2 is bound at residue H59. A heme b-binding site is contributed by H88.

Belongs to the globin family. As to quaternary structure, heterotetramer of two alpha chains and two beta chains. In terms of tissue distribution, red blood cells.

Its function is as follows. Involved in oxygen transport from the lung to the various peripheral tissues. This is Hemoglobin subunit alpha-A (HBAA) from Anser anser anser (Western greylag goose).